The primary structure comprises 528 residues: MNSVDLKEDLQSLLSLENTHQNLSVPKLVEKILARDEGVLTSTGAVRATTGAYTGRSPKDKFIVKEESSEHKIDWGQVNQPISKEAFDRLYTKVVSYLKERDELFVFEGFAGADERYRMPITVVNEFAWHNLFAKQLFIRPDGSTPSSNEKPFTILSAPHFKADPETDGTNSETFIIVSFEKRTILIGGTEYAGEMKKSIFSVMNYLLPEQDILSMHCSANVGQEGDVALFFGLSGTGKTTLSASASRKLIGDDEHGWSGSGVFNIEGGCYAKCVNLSEEKEPQIYKAISFGSVLENVVLDEETREADYDDTFFTENTRAAYPIEMIDNIVKPSIAGHPSAIVFLTADAFGVLPPISRLTKEQAMYHFLSGYTSKLAGTERGVTSPETTFSTCFGSPFLPLPAHVYAEMLGKKIDEHGAKVFLVNTGWTGGGYGTGKRMNLAHTRAMVQAAIEGDLDNAEMITDDIFGLHIPLHIPGVPDEVLQPSKTWDDQEAYQEKAHFLANEFKKNFQKFSHAASDIEAKGGPLV.

Residues Arg-56, Tyr-192, and Lys-198 each coordinate substrate. Residues Lys-198, His-217, and 233-241 (GLSGTGKTT) contribute to the ATP site. Mn(2+) is bound by residues Lys-198 and His-217. Asp-254 is a Mn(2+) binding site. ATP contacts are provided by Glu-282, Arg-319, and Thr-444. Arg-319 is a binding site for substrate.

The protein belongs to the phosphoenolpyruvate carboxykinase (ATP) family. Requires Mn(2+) as cofactor.

The protein resides in the cytoplasm. The catalysed reaction is oxaloacetate + ATP = phosphoenolpyruvate + ADP + CO2. It functions in the pathway carbohydrate biosynthesis; gluconeogenesis. In terms of biological role, involved in the gluconeogenesis. Catalyzes the conversion of oxaloacetate (OAA) to phosphoenolpyruvate (PEP) through direct phosphoryl transfer between the nucleoside triphosphate and OAA. The sequence is that of Phosphoenolpyruvate carboxykinase (ATP) from Bacillus pumilus (strain SAFR-032).